The following is a 352-amino-acid chain: NAD-dependent protein deacetylase sirtuin-2 (352 aa).

Serine 16 carries the phosphoserine modification. A Deacetylase sirtuin-type domain is found at 20 to 301 (RLLDELTLEG…LALAELLGWK (282 aa)). NAD(+) is bound by residues 48–52 (AGIST) and 58–60 (DFR). A Phosphoserine modification is found at serine 63. 130–133 (QNID) contributes to the NAD(+) binding site. Catalysis depends on histidine 150, which acts as the Proton acceptor. Residues cysteine 158 and cysteine 163 each coordinate Zn(2+). Residue serine 170 is modified to Phosphoserine. Cysteine 184 and cysteine 187 together coordinate Zn(2+). NAD(+)-binding positions include 225–226 (TS), 249–251 (NKE), and cysteine 287. The segment at 314-352 (SIDAQSGAGVPNPSTSASPKKSPPPAKDEARTTEREKPQ) is disordered. Residues 324-333 (PNPSTSASPK) show a composition bias toward low complexity. Phosphoserine is present on residues serine 331 and serine 335. The span at 339–352 (AKDEARTTEREKPQ) shows a compositional bias: basic and acidic residues.

This sequence belongs to the sirtuin family. Class I subfamily. Interacts with CDC20, FOXO3 and FZR1. Associates with microtubules in primary cortical mature neurons. Homotrimer. Interacts (via both phosphorylated, unphosphorylated, active or inactive forms) with HDAC6; the interaction is necessary for the complex to interact with alpha-tubulin, suggesting that these proteins belong to a large complex that deacetylates the cytoskeleton. Interacts with FOXO1; the interaction is disrupted upon serum-starvation or oxidative stress, leading to increased level of acetylated FOXO1 and induction of autophagy. Interacts with RELA; the interaction occurs in the cytoplasm and is increased in a TNF-alpha-dependent manner. Interacts with HOXA10; the interaction is direct. Interacts with YWHAB and YWHAG; the interactions occur in a AKT-dependent manner and increase SIRT2-dependent TP53 deacetylation. Interacts with MAPK1/ERK2 and MAPK3/ERK1; the interactions increase SIRT2 stability and deacetylation activity. Interacts (phosphorylated form) with KMT5A isoform 2; the interaction is direct, stimulates KMT5A-mediated methyltransferase activity on histone at 'Lys-20' (H4K20me1) and is increased in a H(2)O(2)-induced oxidative stress-dependent manner. Interacts with G6PD; the interaction is enhanced by H(2)O(2) treatment. Interacts with a G1/S-specific cyclin E-CDK2 complex. Interacts with AURKA, CDK5R1 (p35 form) and CDK5 and HIF1A. Interacts with the tRNA ligase SARS1; recruited to the VEGFA promoter via interaction with SARS1. Interacts with BEX4; negatively regulates alpha-tubulin deacetylation by SIRT2. Interacts with MORN3; the interaction enhances the ubiquitination of p53/TP53. Zn(2+) is required as a cofactor. Post-translationally, phosphorylated at phosphoserine and phosphothreonine. Phosphorylated at Ser-331 by a mitotic kinase CDK1/cyclin B at the G2/M transition; phosphorylation regulates the delay in cell-cycle progression. Phosphorylated at Ser-331 by a mitotic kinase G1/S-specific cyclin E/Cdk2 complex; phosphorylation inactivates SIRT2-mediated alpha-tubulin deacetylation and thereby negatively regulates cell adhesion, cell migration and neurite outgrowth during neuronal differentiation. Phosphorylated by cyclin A/Cdk2 and p35-Cdk5 complexes and to a lesser extent by the cyclin D3/Cdk4 and cyclin B/Cdk1, in vitro. Dephosphorylated at Ser-331 by CDC14A and CDC14B around early anaphase. In terms of processing, acetylated by EP300; acetylation leads both to the decreased of SIRT2-mediated alpha-tubulin deacetylase activity and SIRT2-mediated down-regulation of TP53 transcriptional activity. Ubiquitinated.

The protein resides in the nucleus. The protein localises to the cytoplasm. Its subcellular location is the perinuclear region. It localises to the cytoskeleton. It is found in the microtubule organizing center. The protein resides in the centrosome. The protein localises to the centriole. Its subcellular location is the spindle. It localises to the midbody. It is found in the chromosome. The protein resides in the perikaryon. The protein localises to the cell projection. Its subcellular location is the growth cone. It localises to the myelin membrane. It catalyses the reaction N(6)-acetyl-L-lysyl-[protein] + NAD(+) + H2O = 2''-O-acetyl-ADP-D-ribose + nicotinamide + L-lysyl-[protein]. It carries out the reaction N(6)-tetradecanoyl-L-lysyl-[protein] + NAD(+) + H2O = 2''-O-tetradecanoyl-ADP-D-ribose + nicotinamide + L-lysyl-[protein]. The enzyme catalyses N(6)-hexadecanoyl-L-lysyl-[protein] + NAD(+) + H2O = 2''-O-hexadecanoyl-ADP-D-ribose + nicotinamide + L-lysyl-[protein]. With respect to regulation, inhibited by Sirtinol, A3 and M15 small molecules. Inhibited by nicotinamide. Inhibited by a macrocyclic peptide inhibitor S2iL5. Inhibited by EP300-induced acetylation. In terms of biological role, NAD-dependent protein deacetylase, which deacetylates internal lysines on histone and alpha-tubulin as well as many other proteins such as key transcription factors. Participates in the modulation of multiple and diverse biological processes such as cell cycle control, genomic integrity, microtubule dynamics, cell differentiation, metabolic networks, and autophagy. Plays a major role in the control of cell cycle progression and genomic stability. Functions in the antephase checkpoint preventing precocious mitotic entry in response to microtubule stress agents, and hence allowing proper inheritance of chromosomes. Positively regulates the anaphase promoting complex/cyclosome (APC/C) ubiquitin ligase complex activity by deacetylating CDC20 and FZR1, then allowing progression through mitosis. Associates both with chromatin at transcriptional start sites (TSSs) and enhancers of active genes. Plays a role in cell cycle and chromatin compaction through epigenetic modulation of the regulation of histone H4 'Lys-20' methylation (H4K20me1) during early mitosis. Specifically deacetylates histone H4 at 'Lys-16' (H4K16ac) between the G2/M transition and metaphase enabling H4K20me1 deposition by KMT5A leading to ulterior levels of H4K20me2 and H4K20me3 deposition throughout cell cycle, and mitotic S-phase progression. Deacetylates KMT5A modulating KMT5A chromatin localization during the mitotic stress response. Also deacetylates histone H3 at 'Lys-57' (H3K56ac) during the mitotic G2/M transition. During oocyte meiosis progression, may deacetylate histone H4 at 'Lys-16' (H4K16ac) and alpha-tubulin, regulating spindle assembly and chromosome alignment by influencing microtubule dynamics and kinetochore function. Deacetylates histone H4 at 'Lys-16' (H4K16ac) at the VEGFA promoter and thereby contributes to regulate expression of VEGFA, a key regulator of angiogenesis. Deacetylates alpha-tubulin at 'Lys-40' and hence controls neuronal motility, oligodendroglial cell arbor projection processes and proliferation of non-neuronal cells. Phosphorylation at Ser-368 by a G1/S-specific cyclin E-CDK2 complex inactivates SIRT2-mediated alpha-tubulin deacetylation, negatively regulating cell adhesion, cell migration and neurite outgrowth during neuronal differentiation. Deacetylates PARD3 and participates in the regulation of Schwann cell peripheral myelination formation during early postnatal development and during postinjury remyelination. Involved in several cellular metabolic pathways. Plays a role in the regulation of blood glucose homeostasis by deacetylating and stabilizing phosphoenolpyruvate carboxykinase PCK1 activity in response to low nutrient availability. Acts as a key regulator in the pentose phosphate pathway (PPP) by deacetylating and activating the glucose-6-phosphate G6PD enzyme, and therefore, stimulates the production of cytosolic NADPH to counteract oxidative damage. Maintains energy homeostasis in response to nutrient deprivation as well as energy expenditure by inhibiting adipogenesis and promoting lipolysis. Attenuates adipocyte differentiation by deacetylating and promoting FOXO1 interaction to PPARG and subsequent repression of PPARG-dependent transcriptional activity. Plays a role in the regulation of lysosome-mediated degradation of protein aggregates by autophagy in neuronal cells. Deacetylates FOXO1 in response to oxidative stress or serum deprivation, thereby negatively regulating FOXO1-mediated autophagy. Deacetylates a broad range of transcription factors and co-regulators regulating target gene expression. Deacetylates transcriptional factor FOXO3 stimulating the ubiquitin ligase SCF(SKP2)-mediated FOXO3 ubiquitination and degradation. Deacetylates HIF1A and therefore promotes HIF1A degradation and inhibition of HIF1A transcriptional activity in tumor cells in response to hypoxia. Deacetylates RELA in the cytoplasm inhibiting NF-kappaB-dependent transcription activation upon TNF-alpha stimulation. Inhibits transcriptional activation by deacetylating p53/TP53 and EP300. Also deacetylates EIF5A. Functions as a negative regulator on oxidative stress-tolerance in response to anoxia-reoxygenation conditions. Plays a role as tumor suppressor. In addition to protein deacetylase activity, also has activity toward long-chain fatty acyl groups and mediates protein-lysine demyristoylation and depalmitoylation of target proteins, such as ARF6 and KRAS, thereby regulating their association with membranes. This is NAD-dependent protein deacetylase sirtuin-2 (SIRT2) from Pongo abelii (Sumatran orangutan).